A 232-amino-acid polypeptide reads, in one-letter code: MAGDVGGRSCTDAELLLHPELLSQEFLLLTLEQKNIAVENEVRVNKDNLTDLYVQHAIPLPQRDLPKNRWGKMMEKKREHHEVKNDTKRSSAVDGLRKRPLIVFDGSSTSTSIKVKRTENGADDRLKPLAQIGSTSDAFWKSPNSSSRISPLVLFSNLPVNHKMEHNNNDTQQNHDLMNRKSPSGPVKSPPLSPVGTTPVKLKRAAPKEEAEATNHLKPPEVKRKIQHVTWP.

A phosphoserine mark is found at Ser112, Ser182, Ser184, Ser189, and Ser193. The tract at residues 163–232 (KMEHNNNDTQ…KRKIQHVTWP (70 aa)) is disordered. A phosphothreonine mark is found at Thr197 and Thr198. Over residues 206–224 (APKEEAEATNHLKPPEVKR) the composition is skewed to basic and acidic residues.

Belongs to the ashwin family. As to quaternary structure, component of the tRNA-splicing ligase complex.

The protein resides in the nucleus. The protein is Ashwin of Mus musculus (Mouse).